The primary structure comprises 209 residues: Peroxynitrite isomerase 2 (209 aa).

The short motif at 56-62 (GVWRGEG) is the GXWXGXG element. Heme b is bound by residues Lys172 and His199.

It belongs to the nitrobindin family. Homodimer. Heme b serves as cofactor.

The enzyme catalyses peroxynitrite = nitrate. The protein operates within nitrogen metabolism. Functionally, heme-binding protein able to scavenge peroxynitrite and to protect free L-tyrosine against peroxynitrite-mediated nitration, by acting as a peroxynitrite isomerase that converts peroxynitrite to nitrate. Therefore, this protein likely plays a role in peroxynitrite sensing and in the detoxification of reactive nitrogen and oxygen species (RNS and ROS, respectively). Is able to bind nitric oxide (NO) in vitro, but may act as a sensor of peroxynitrite levels in vivo. The polypeptide is Peroxynitrite isomerase 2 (Mycolicibacterium vanbaalenii (strain DSM 7251 / JCM 13017 / BCRC 16820 / KCTC 9966 / NRRL B-24157 / PYR-1) (Mycobacterium vanbaalenii)).